The primary structure comprises 186 residues: Ribosome-recycling factor (186 aa).

Belongs to the RRF family.

Its subcellular location is the cytoplasm. Its function is as follows. Responsible for the release of ribosomes from messenger RNA at the termination of protein biosynthesis. May increase the efficiency of translation by recycling ribosomes from one round of translation to another. The chain is Ribosome-recycling factor from Chlorobaculum parvum (strain DSM 263 / NCIMB 8327) (Chlorobium vibrioforme subsp. thiosulfatophilum).